The following is a 660-amino-acid chain: MKAVIFAYHDMGCQGVQAVLDAGYEIAAIFTHADNPAENTFFGSVSRLAAGLGIPVYAPDNVNHPIWVDRIAELAPDIIFSFYYRNLLSEEILHLAPAGAFNLHGSLLPAYRGRAPLNWVLVNGESETGVTLHRMVKRADAGEIVASQRVAIAQDDVALTLHHKLCQAARQLLNSILPTMKCGDIPSVPQRESDATYYGRRRPEDGLIDWHKPVSTVHNLVRAVAAPWPGAFSYNGSQKFTIWSSRICPDAQGALPGSVISVSPLRVACADGALEIITGQAGDGITVQGSQLAQTLGLVAGARLNRPPATSGKRRIRVLILGVNGFIGNHLTERLLNEENYEVYGMDIGSNAISRFLLHPRFHFVEGDISIHSEWIEYHVKKCDVVLPLVAIATPIEYTRNPLRVFELDFEENLRIIRYCVKYRKRVVFPSTSEVYGMCTDASFDEDKSNLIVGPVNKPRWIYSVSKQLLDRVIWAYGEKEGLRFTLFRPFNWMGPRLDSLNAARIGSSRAITQLILNLVEGTPIKLIDGGQQKRCFTDIRDGIEALFRIIVNEGDRCDGKIINIGNPDNEASIQELATLLLDSFDKHPLRCHFPPFAGFQVVESRSYYGKGYQDVAHRKPSIDNARRCLGWEPSIAMRDTVEETLDFFLRSVDVAERAS.

The formyltransferase ArnAFT stretch occupies residues 1–304 (MKAVIFAYHD…TLGLVAGARL (304 aa)). The active-site Proton donor; for formyltransferase activity is histidine 104. (6R)-10-formyltetrahydrofolate contacts are provided by residues arginine 114 and 136 to 140 (VKRAD). The interval 314 to 660 (RRIRVLILGV…RSVDVAERAS (347 aa)) is dehydrogenase ArnADH. NAD(+)-binding positions include aspartate 347 and 368–369 (DI). UDP-alpha-D-glucuronate contacts are provided by residues alanine 393, tyrosine 398, and 432–433 (TS). Glutamate 434 (proton acceptor; for decarboxylase activity) is an active-site residue. UDP-alpha-D-glucuronate-binding positions include arginine 460, asparagine 492, 526–535 (KLIDGGQQKR), and tyrosine 613. The Proton donor; for decarboxylase activity role is filled by arginine 619.

This sequence in the N-terminal section; belongs to the Fmt family. UDP-L-Ara4N formyltransferase subfamily. It in the C-terminal section; belongs to the NAD(P)-dependent epimerase/dehydratase family. UDP-glucuronic acid decarboxylase subfamily. Homohexamer, formed by a dimer of trimers.

The enzyme catalyses UDP-alpha-D-glucuronate + NAD(+) = UDP-beta-L-threo-pentopyranos-4-ulose + CO2 + NADH. It catalyses the reaction UDP-4-amino-4-deoxy-beta-L-arabinose + (6R)-10-formyltetrahydrofolate = UDP-4-deoxy-4-formamido-beta-L-arabinose + (6S)-5,6,7,8-tetrahydrofolate + H(+). It participates in nucleotide-sugar biosynthesis; UDP-4-deoxy-4-formamido-beta-L-arabinose biosynthesis; UDP-4-deoxy-4-formamido-beta-L-arabinose from UDP-alpha-D-glucuronate: step 1/3. It functions in the pathway nucleotide-sugar biosynthesis; UDP-4-deoxy-4-formamido-beta-L-arabinose biosynthesis; UDP-4-deoxy-4-formamido-beta-L-arabinose from UDP-alpha-D-glucuronate: step 3/3. The protein operates within bacterial outer membrane biogenesis; lipopolysaccharide biosynthesis. In terms of biological role, bifunctional enzyme that catalyzes the oxidative decarboxylation of UDP-glucuronic acid (UDP-GlcUA) to UDP-4-keto-arabinose (UDP-Ara4O) and the addition of a formyl group to UDP-4-amino-4-deoxy-L-arabinose (UDP-L-Ara4N) to form UDP-L-4-formamido-arabinose (UDP-L-Ara4FN). The modified arabinose is attached to lipid A and is required for resistance to polymyxin and cationic antimicrobial peptides. This Salmonella newport (strain SL254) protein is Bifunctional polymyxin resistance protein ArnA.